The chain runs to 305 residues: L-lactate dehydrogenase (305 aa).

NAD(+) contacts are provided by residues V11, D32, K37, and 76–77; that span reads GV. Substrate is bound by residues Q79, R85, and 117–120; that span reads NPVD. NAD(+) contacts are provided by residues 115–117 and S140; that span reads ATN. 145-148 is a substrate binding site; the sequence is DTAR. Positions 150 and 165 each coordinate beta-D-fructose 1,6-bisphosphate. Residue H172 is the Proton acceptor of the active site. Y218 carries the post-translational modification Phosphotyrosine. Residue T227 participates in substrate binding.

It belongs to the LDH/MDH superfamily. LDH family. In terms of assembly, homotetramer.

Its subcellular location is the cytoplasm. It catalyses the reaction (S)-lactate + NAD(+) = pyruvate + NADH + H(+). Its pathway is fermentation; pyruvate fermentation to lactate; (S)-lactate from pyruvate: step 1/1. With respect to regulation, allosterically activated by fructose 1,6-bisphosphate (FBP). Functionally, catalyzes the conversion of lactate to pyruvate. The polypeptide is L-lactate dehydrogenase (Chloroherpeton thalassium (strain ATCC 35110 / GB-78)).